A 463-amino-acid chain; its full sequence is UDP-N-acetylmuramoylalanine--D-glutamate ligase (463 aa).

An ATP-binding site is contributed by 109-115 (GTDGKST).

This sequence belongs to the MurCDEF family.

It is found in the cytoplasm. It carries out the reaction UDP-N-acetyl-alpha-D-muramoyl-L-alanine + D-glutamate + ATP = UDP-N-acetyl-alpha-D-muramoyl-L-alanyl-D-glutamate + ADP + phosphate + H(+). It functions in the pathway cell wall biogenesis; peptidoglycan biosynthesis. Functionally, cell wall formation. Catalyzes the addition of glutamate to the nucleotide precursor UDP-N-acetylmuramoyl-L-alanine (UMA). In Leptospira interrogans serogroup Icterohaemorrhagiae serovar Lai (strain 56601), this protein is UDP-N-acetylmuramoylalanine--D-glutamate ligase.